A 72-amino-acid chain; its full sequence is UPF0154 protein lhv_1362 (72 aa).

A helical membrane pass occupies residues 3–23 (LGLAIFLIIIALLVGAVAGFY).

The protein belongs to the UPF0154 family.

It localises to the cell membrane. The sequence is that of UPF0154 protein lhv_1362 from Lactobacillus helveticus (strain DPC 4571).